We begin with the raw amino-acid sequence, 138 residues long: Small ribosomal subunit protein uS11c (138 aa).

The interval 1–23 (MAKPILRIGSRKNTRSGSRKNVR) is disordered. Over residues 9–23 (GSRKNTRSGSRKNVR) the composition is skewed to basic residues.

It belongs to the universal ribosomal protein uS11 family. Part of the 30S ribosomal subunit.

It localises to the plastid. The protein localises to the chloroplast. The polypeptide is Small ribosomal subunit protein uS11c (Barbarea verna (Land cress)).